The sequence spans 130 residues: Small ribosomal subunit protein uS8 (130 aa).

It belongs to the universal ribosomal protein uS8 family. Part of the 30S ribosomal subunit. Contacts proteins S5 and S12.

Functionally, one of the primary rRNA binding proteins, it binds directly to 16S rRNA central domain where it helps coordinate assembly of the platform of the 30S subunit. The polypeptide is Small ribosomal subunit protein uS8 (Neisseria meningitidis serogroup C (strain 053442)).